The sequence spans 161 residues: Nucleotide-binding protein Rfer_2692 (161 aa).

This sequence belongs to the YajQ family.

Its function is as follows. Nucleotide-binding protein. The polypeptide is Nucleotide-binding protein Rfer_2692 (Albidiferax ferrireducens (strain ATCC BAA-621 / DSM 15236 / T118) (Rhodoferax ferrireducens)).